We begin with the raw amino-acid sequence, 464 residues long: Cytoplasmic tRNA 2-thiolation protein 2 (464 aa).

The protein belongs to the CTU2/NCS2 family.

It is found in the cytoplasm. The protein operates within tRNA modification; 5-methoxycarbonylmethyl-2-thiouridine-tRNA biosynthesis. Functionally, plays a central role in 2-thiolation of mcm(5)S(2)U at tRNA wobble positions of tRNA(Lys), tRNA(Glu) and tRNA(Gln). May act by forming a heterodimer with NCS6/CTU1 that ligates sulfur from thiocarboxylated URM1 onto the uridine of tRNAs at wobble position. The polypeptide is Cytoplasmic tRNA 2-thiolation protein 2 (Oryza sativa subsp. indica (Rice)).